The chain runs to 128 residues: Tachykinin-4 (128 aa).

A signal peptide spans 1–16 (MLPLLALLLLIGPSVC). The propeptide occupies 17–54 (TTAGDREELAFGAEAESWVTVNLKGIPVPSIELKLQEL). At Met-66 the chain carries Methionine amide. Residues 69–128 (RVGGYQLGRIVQDLLGTRGLSIEGTCRQAASQQRARPGAVTRESLQSREEDEAPLTTSNV) constitute a propeptide that is removed on maturation. Residues 96 to 128 (QAASQQRARPGAVTRESLQSREEDEAPLTTSNV) form a disordered region.

It belongs to the tachykinin family. In terms of tissue distribution, expressed in hematopoietic cells with highest levels in pre- and pro-B cells but not in later developmental stages. Also detected in uterus, skeletal muscle, brain, spleen, stomach, skin and lactating mammary gland and in cells of myeloid lineage including dendritic and microglial cells and macrophages. In uterus, highest expression is observed in non-pregnant diestrus mice and in day 5 pregnant mice. Compared with mice in diestrus, decreases 2.6-fold in uteri from non-pregnant mice in estrus and 10.2-fold in day 17 pregnant mice. Detected at sites of chronic inflammation such as granulomas.

The protein resides in the secreted. In terms of biological role, tachykinins are active peptides which excite neurons, evoke behavioral responses, are potent vasodilators and secretagogues, and contract (directly or indirectly) many smooth muscles. Hemokinin induces plasma extravasation, mast cell degranulation, muscle contraction, salivary secretion and scratching behavior. Increases sperm motility. Induces potent analgesic effects and may play a role in pain modulation. Promotes survival of bone marrow B lineage cells and of cultured LPS-stimulated pre-B cells and may act as an autocrine factor required for B-cell survival and proliferation. Lowers systemic arterial pressure following intravenous injection. Induces interferon-gamma production and may play a role in the inflammatory response. Shows potent affinity and specificity for the NK-1 receptor. The polypeptide is Tachykinin-4 (Mus musculus (Mouse)).